A 248-amino-acid polypeptide reads, in one-letter code: Triosephosphate isomerase (248 aa).

Residue 9-11 participates in substrate binding; sequence NWK. H94 serves as the catalytic Electrophile. The Proton acceptor role is filled by E166. Substrate contacts are provided by residues G172, S212, and 233–234; that span reads GG.

It belongs to the triosephosphate isomerase family. As to quaternary structure, homodimer.

Its subcellular location is the cytoplasm. It carries out the reaction D-glyceraldehyde 3-phosphate = dihydroxyacetone phosphate. It participates in carbohydrate biosynthesis; gluconeogenesis. The protein operates within carbohydrate degradation; glycolysis; D-glyceraldehyde 3-phosphate from glycerone phosphate: step 1/1. Its function is as follows. Involved in the gluconeogenesis. Catalyzes stereospecifically the conversion of dihydroxyacetone phosphate (DHAP) to D-glyceraldehyde-3-phosphate (G3P). The sequence is that of Triosephosphate isomerase from Clostridium botulinum (strain Loch Maree / Type A3).